The sequence spans 902 residues: Calcium-activated chloride channel regulator 3A-1 (902 aa).

An N-terminal signal peptide occupies residues 1 to 21; it reads MVPGLQVLLFLTLHLLQNTES. The interval 45 to 199 is metalloprotease domain; it reads DERLIPSIKE…RITGTNVVHN (155 aa). A glycan (N-linked (GlcNAc...) asparagine) is linked at N75. H155 is a Zn(2+) binding site. E156 is an active-site residue. Residues H159 and D166 each contribute to the Zn(2+) site. The region spanning 308–476 is the VWFA domain; it reads VVCLVLDKSG…NSLIDAFSRI (169 aa). Residues N504, N515, N630, N687, N697, N809, and N814 are each glycosylated (N-linked (GlcNAc...) asparagine).

The protein belongs to the CLCR family. As to quaternary structure, part of a complex composed of complement component C3, CLCA1/CLCA3, A2ML1/OH and ALB/serum albumin. Post-translationally, glycosylated. In terms of processing, the 130-kDa product is autoproteolytically processed by the metalloprotease domain and yields two subunits, a 90-kDa protein and a group of 32- to 38-kDa proteins. The cleavage is necessary for calcium-activated chloride channel (CaCC) activation activity. As to expression, highly expressed in skin and spleen, and at lower levels in kidney and liver. Also detected in lung and brain. Not detected in lung or brain. In lung, localizes to respiratory epithelia of the bronchi and trachea and the submucosal glands.

It localises to the cell membrane. Its function is as follows. Plays a role in modulating chloride current across the plasma membrane in a calcium-dependent manner. This chain is Calcium-activated chloride channel regulator 3A-1, found in Mus musculus (Mouse).